The primary structure comprises 94 residues: Co-chaperonin GroES (94 aa).

This sequence belongs to the GroES chaperonin family. Heptamer of 7 subunits arranged in a ring. Interacts with the chaperonin GroEL.

Its subcellular location is the cytoplasm. Its function is as follows. Together with the chaperonin GroEL, plays an essential role in assisting protein folding. The GroEL-GroES system forms a nano-cage that allows encapsulation of the non-native substrate proteins and provides a physical environment optimized to promote and accelerate protein folding. GroES binds to the apical surface of the GroEL ring, thereby capping the opening of the GroEL channel. The sequence is that of Co-chaperonin GroES from Ehrlichia canis (strain Jake).